The chain runs to 192 residues: Ion-translocating oxidoreductase complex subunit B (192 aa).

The interval 1-26 is hydrophobic; the sequence is MSAVWIAVIAISLLGLIFGLILGYAS. Residues 32-91 enclose the 4Fe-4S domain; the sequence is QDDPVVEKIDELLPQSQCGQCGYPGCRPYAEAVGAQGEKINRCAPGGEAVMLKIAALLNV. [4Fe-4S] cluster contacts are provided by Cys49, Cys52, Cys57, Cys74, Cys117, Cys120, Cys123, Cys127, Cys147, Cys150, Cys153, and Cys157. 4Fe-4S ferredoxin-type domains follow at residues 108–137 and 138–167; these read MLAV…GATR and AMHT…LVPV.

It belongs to the 4Fe4S bacterial-type ferredoxin family. RnfB subfamily. The complex is composed of six subunits: RnfA, RnfB, RnfC, RnfD, RnfE and RnfG. [4Fe-4S] cluster serves as cofactor.

It localises to the cell inner membrane. Its function is as follows. Part of a membrane-bound complex that couples electron transfer with translocation of ions across the membrane. The protein is Ion-translocating oxidoreductase complex subunit B of Klebsiella pneumoniae (strain 342).